A 149-amino-acid chain; its full sequence is Ribose-5-phosphate isomerase B (149 aa).

9 to 10 is a binding site for D-ribulose 5-phosphate; the sequence is DH. Catalysis depends on Cys66, which acts as the Proton acceptor. 67 to 71 is a D-ribulose 5-phosphate binding site; it reads GTGVG. Residue His99 is the Proton donor of the active site. D-ribulose 5-phosphate-binding residues include Asn100, Arg110, Arg133, and Arg137.

Belongs to the LacAB/RpiB family. As to quaternary structure, homodimer, and homotetramer.

The enzyme catalyses aldehydo-D-ribose 5-phosphate = D-ribulose 5-phosphate. The catalysed reaction is D-allose 6-phosphate = D-allulose 6-phosphate. Its pathway is carbohydrate degradation; pentose phosphate pathway; D-ribose 5-phosphate from D-ribulose 5-phosphate (non-oxidative stage): step 1/1. With respect to regulation, inhibited by iodoacetate and glucose 6-phosphate. Catalyzes the interconversion of ribulose-5-P and ribose-5-P. It probably also has activity on D-allose 6-phosphate. The sequence is that of Ribose-5-phosphate isomerase B from Escherichia coli (strain K12).